Reading from the N-terminus, the 220-residue chain is Histone deacetylase complex subunit SAP30 (220 aa).

Residues Met-1–Lys-129 are interaction with NCOR1. Thr-5 is subject to Phosphothreonine. An Atypical zinc finger spans residues Cys-67–His-115. Lys-87 participates in a covalent cross-link: Glycyl lysine isopeptide (Lys-Gly) (interchain with G-Cter in SUMO2). A disordered region spans residues Arg-123–Ile-143. Positions Gly-130–His-220 are interaction with SIN3A. Residues Ser-131 and Ser-138 each carry the phosphoserine modification. Thr-145 carries the post-translational modification Phosphothreonine. Residues Lys-194 and Lys-214 each participate in a glycyl lysine isopeptide (Lys-Gly) (interchain with G-Cter in SUMO2) cross-link.

Belongs to the SAP30 family. As to quaternary structure, component of the histone deacetylase complex that includes at least SIN3A, HDAC1 and HDAC2. Found in a complex composed of at least SINHCAF, SIN3A, HDAC1, SAP30, RBBP4, OGT and TET1. Interacts with HDAC1. Interacts with SIN3A, SIN3B, HDAC2, RBBP4 and NCOR1. Interacts directly with SAMSN1. Interacts with HCFC1. Interacts with SAP30BP.

It localises to the nucleus. In terms of biological role, involved in the functional recruitment of the Sin3-histone deacetylase complex (HDAC) to a specific subset of N-CoR corepressor complexes. Capable of transcription repression by N-CoR. Active in deacetylating core histone octamers (when in a complex) but inactive in deacetylating nucleosomal histones. The polypeptide is Histone deacetylase complex subunit SAP30 (Mus musculus (Mouse)).